Here is a 360-residue protein sequence, read N- to C-terminus: Peptide chain release factor 1 (360 aa).

Q237 is modified (N5-methylglutamine).

The protein belongs to the prokaryotic/mitochondrial release factor family. Methylated by PrmC. Methylation increases the termination efficiency of RF1.

It is found in the cytoplasm. In terms of biological role, peptide chain release factor 1 directs the termination of translation in response to the peptide chain termination codons UAG and UAA. This is Peptide chain release factor 1 from Pseudomonas fluorescens (strain ATCC BAA-477 / NRRL B-23932 / Pf-5).